The chain runs to 239 residues: LexA repressor (239 aa).

Residues 26–46 (FDEMKDALDLKSKSGIHRLIT) constitute a DNA-binding region (H-T-H motif). Catalysis depends on for autocatalytic cleavage activity residues Ser-160 and Lys-198.

Belongs to the peptidase S24 family. As to quaternary structure, homodimer.

It catalyses the reaction Hydrolysis of Ala-|-Gly bond in repressor LexA.. Functionally, represses a number of genes involved in the response to DNA damage (SOS response), including recA and lexA. In the presence of single-stranded DNA, RecA interacts with LexA causing an autocatalytic cleavage which disrupts the DNA-binding part of LexA, leading to derepression of the SOS regulon and eventually DNA repair. This chain is LexA repressor, found in Methylobacterium sp. (strain 4-46).